The chain runs to 184 residues: Large ribosomal subunit protein uL5 (184 aa).

This sequence belongs to the universal ribosomal protein uL5 family. Part of the 50S ribosomal subunit; part of the 5S rRNA/L5/L18/L25 subcomplex. Contacts the 5S rRNA and the P site tRNA. Forms a bridge to the 30S subunit in the 70S ribosome.

In terms of biological role, this is one of the proteins that bind and probably mediate the attachment of the 5S RNA into the large ribosomal subunit, where it forms part of the central protuberance. In the 70S ribosome it contacts protein S13 of the 30S subunit (bridge B1b), connecting the 2 subunits; this bridge is implicated in subunit movement. Contacts the P site tRNA; the 5S rRNA and some of its associated proteins might help stabilize positioning of ribosome-bound tRNAs. The chain is Large ribosomal subunit protein uL5 from Syntrophotalea carbinolica (strain DSM 2380 / NBRC 103641 / GraBd1) (Pelobacter carbinolicus).